The sequence spans 185 residues: dCTP deaminase (185 aa).

107-112 provides a ligand contact to dCTP; sequence KSTYAR. The active-site Proton donor/acceptor is the E133. The dCTP site is built by Q152, Y166, and Q176.

Belongs to the dCTP deaminase family. Homotrimer.

It carries out the reaction dCTP + H2O + H(+) = dUTP + NH4(+). The protein operates within pyrimidine metabolism; dUMP biosynthesis; dUMP from dCTP (dUTP route): step 1/2. Catalyzes the deamination of dCTP to dUTP. In Nitratiruptor sp. (strain SB155-2), this protein is dCTP deaminase.